The following is a 306-amino-acid chain: Abnormal cell migration protein 21 (306 aa).

2 TSP type-1 domains span residues 55–102 (PGGW…AISS) and 109–155 (FGSW…DECP). C-linked (Man) tryptophan glycans are attached at residues W58 and W61. 3 disulfide bridges follow: C121–C149, C123–C154, and C134–C139. Residues 240 to 260 (CLPLHFAIPIFCFCILTGFLL) traverse the membrane as a helical segment.

Glycosylated via C-mannosylation by dpy-19 at Trp-58 and Trp-61.

It is found in the membrane. Functionally, required for determination of left/right asymmetry in nervous system. Acts together with unc-40 to control an initial left-right asymmetric polarization of the Q neuroblasts. Mig-21 and unc-40 may control the asymmetry in Wnt signaling response by restricting posterior polarization to one of the 2 Q neuroblasts. Involved in left-side QL posterior migration. In right-side QR, unc-40 and mig-21 pathways mutually inhibit each other in posterior migration, allowing anterior QR migration. In Caenorhabditis elegans, this protein is Abnormal cell migration protein 21 (mig-21).